Here is a 570-residue protein sequence, read N- to C-terminus: Proline--tRNA ligase (570 aa).

Belongs to the class-II aminoacyl-tRNA synthetase family. ProS type 1 subfamily. In terms of assembly, homodimer.

Its subcellular location is the cytoplasm. It catalyses the reaction tRNA(Pro) + L-proline + ATP = L-prolyl-tRNA(Pro) + AMP + diphosphate. Its function is as follows. Catalyzes the attachment of proline to tRNA(Pro) in a two-step reaction: proline is first activated by ATP to form Pro-AMP and then transferred to the acceptor end of tRNA(Pro). As ProRS can inadvertently accommodate and process non-cognate amino acids such as alanine and cysteine, to avoid such errors it has two additional distinct editing activities against alanine. One activity is designated as 'pretransfer' editing and involves the tRNA(Pro)-independent hydrolysis of activated Ala-AMP. The other activity is designated 'posttransfer' editing and involves deacylation of mischarged Ala-tRNA(Pro). The misacylated Cys-tRNA(Pro) is not edited by ProRS. This chain is Proline--tRNA ligase, found in Neisseria meningitidis serogroup A / serotype 4A (strain DSM 15465 / Z2491).